A 373-amino-acid chain; its full sequence is tRNA-specific 2-thiouridylase MnmA (373 aa).

Residues 12 to 19 (GMSGGVDS) and Met38 each bind ATP. The segment at 98–100 (NPD) is interaction with target base in tRNA. Cys103 acts as the Nucleophile in catalysis. A disulfide bridge links Cys103 with Cys200. Gly127 lines the ATP pocket. The tract at residues 150 to 152 (KDQ) is interaction with tRNA. Residue Cys200 is the Cysteine persulfide intermediate of the active site. Residues 312–313 (RY) are interaction with tRNA.

The protein belongs to the MnmA/TRMU family.

The protein localises to the cytoplasm. It catalyses the reaction S-sulfanyl-L-cysteinyl-[protein] + uridine(34) in tRNA + AH2 + ATP = 2-thiouridine(34) in tRNA + L-cysteinyl-[protein] + A + AMP + diphosphate + H(+). Its function is as follows. Catalyzes the 2-thiolation of uridine at the wobble position (U34) of tRNA, leading to the formation of s(2)U34. In Streptococcus pyogenes serotype M18 (strain MGAS8232), this protein is tRNA-specific 2-thiouridylase MnmA.